Consider the following 509-residue polypeptide: Cytochrome P450 monooxygenase alt3 (509 aa).

A helical membrane pass occupies residues isoleucine 25 to leucine 45. Heme is bound at residue cysteine 450.

The protein belongs to the cytochrome P450 family. It depends on heme as a cofactor.

The protein resides in the membrane. The protein operates within secondary metabolite biosynthesis. Functionally, cytochrome P450 monooxygenase; part of the gene cluster that mediates the biosynthesis of alternapyrone derivatives. Alternapyrone is a decaketide with octa-methylation from methionine on every C2 unit except the third unit. All the domains in the polyketide synthase alt5 are apparently involved in alternapyrone synthesis, that is, the 8 CMeT, 7 KR, 7 DH, and 4 ER reactions in the 9 KS-mediated condensation steps required for alternapyrone synthesis. the alternapyrone produced by alt5 might be intensively modified by cytochrome P450 monooxygenases alt1, alt2 and alt3 and FAD-dependent oxidoreductase alt4 present in the alt gene cluster. The protein is Cytochrome P450 monooxygenase alt3 of Alternaria solani.